Here is a 246-residue protein sequence, read N- to C-terminus: MAGHSKWANIQHRKGRVDAQRGKMWSKLSKAIIVSAKMGGGDPSLNIRLRKAIDDAKAVSMPKDNIERAIKRGTGELDGDAVEEVLYEGYGPGGVAVMCLALTDNRNRTAPELRTMFGKFGGELGKTGCVSYLFERKGIFVFGEGADEEKVTELALENGADDVEVDEDGKVQVTCSPEAFSDLEVAFDEAGMDTEVSEVTQIASTNVDLDESVSGKVLALLEALDDHDDIQTVSTNANFPSESVSE.

The protein belongs to the TACO1 family.

The protein resides in the cytoplasm. This chain is Probable transcriptional regulatory protein RB5500, found in Rhodopirellula baltica (strain DSM 10527 / NCIMB 13988 / SH1).